The sequence spans 280 residues: Alpha-methyl-mannoside-specific lectin (280 aa).

The first 26 residues, 1–26 (MAISKKILPLLSIATIFLLLLNKAHS), serve as a signal peptide directing secretion. A carbohydrate is bound by residues aspartate 114 and glycine 134. Residues glutamate 156 and aspartate 158 each contribute to the Mn(2+) site. Ca(2+) contacts are provided by aspartate 158 and phenylalanine 160. The a carbohydrate site is built by serine 165 and asparagine 166. Asparagine 166 and aspartate 169 together coordinate Ca(2+). Residues aspartate 169 and histidine 174 each coordinate Mn(2+). Glycine 248 and glutamine 250 together coordinate a carbohydrate.

It belongs to the leguminous lectin family. In terms of assembly, homodimer. Glycosylated.

In terms of biological role, alpha-methyl-D-mannoside-specific lectin. Has hemagglutinating activity towards rabbit erythrocytes. Binds to cytokinins and significantly inhibits physiological effects of cytokinin activity such as cotyledon expansion and delayed leaf senescence. The chain is Alpha-methyl-mannoside-specific lectin from Arachis hypogaea (Peanut).